The primary structure comprises 284 residues: Tropomyosin (284 aa).

Positions 1-38 are disordered; the sequence is MEAIKKKMQAMKLEKDNAVDRAETAEQQSREAALRAEK. Residues 1-284 adopt a coiled-coil conformation; the sequence is MEAIKKKMQA…DQTFSELTGY (284 aa). The span at 12 to 38 shows a compositional bias: basic and acidic residues; the sequence is KLEKDNAVDRAETAEQQSREAALRAEK.

Belongs to the tropomyosin family. Homodimer.

Tropomyosin, in association with the troponin complex, plays a central role in the calcium dependent regulation of muscle contraction. The protein is Tropomyosin of Rhipicephalus microplus (Cattle tick).